The following is a 457-amino-acid chain: ATP-dependent protease ATPase subunit HslU (457 aa).

ATP contacts are provided by residues Ile-18 and 60 to 65 (GVGKTE). The interval 142-171 (KQPGMGFFNPAAPEEQEEQPSADQSSTREK) is disordered. Positions 269, 335, and 407 each coordinate ATP.

The protein belongs to the ClpX chaperone family. HslU subfamily. As to quaternary structure, a double ring-shaped homohexamer of HslV is capped on each side by a ring-shaped HslU homohexamer. The assembly of the HslU/HslV complex is dependent on binding of ATP.

Its subcellular location is the cytoplasm. Functionally, ATPase subunit of a proteasome-like degradation complex; this subunit has chaperone activity. The binding of ATP and its subsequent hydrolysis by HslU are essential for unfolding of protein substrates subsequently hydrolyzed by HslV. HslU recognizes the N-terminal part of its protein substrates and unfolds these before they are guided to HslV for hydrolysis. This chain is ATP-dependent protease ATPase subunit HslU, found in Maridesulfovibrio salexigens (strain ATCC 14822 / DSM 2638 / NCIMB 8403 / VKM B-1763) (Desulfovibrio salexigens).